The following is a 211-amino-acid chain: ATP phosphoribosyltransferase (211 aa).

This sequence belongs to the ATP phosphoribosyltransferase family. Short subfamily. In terms of assembly, heteromultimer composed of HisG and HisZ subunits.

The protein localises to the cytoplasm. The catalysed reaction is 1-(5-phospho-beta-D-ribosyl)-ATP + diphosphate = 5-phospho-alpha-D-ribose 1-diphosphate + ATP. Its pathway is amino-acid biosynthesis; L-histidine biosynthesis; L-histidine from 5-phospho-alpha-D-ribose 1-diphosphate: step 1/9. Functionally, catalyzes the condensation of ATP and 5-phosphoribose 1-diphosphate to form N'-(5'-phosphoribosyl)-ATP (PR-ATP). Has a crucial role in the pathway because the rate of histidine biosynthesis seems to be controlled primarily by regulation of HisG enzymatic activity. The sequence is that of ATP phosphoribosyltransferase from Bacillus cereus (strain ATCC 14579 / DSM 31 / CCUG 7414 / JCM 2152 / NBRC 15305 / NCIMB 9373 / NCTC 2599 / NRRL B-3711).